The sequence spans 152 residues: SsrA-binding protein (152 aa).

The protein belongs to the SmpB family.

Its subcellular location is the cytoplasm. Functionally, required for rescue of stalled ribosomes mediated by trans-translation. Binds to transfer-messenger RNA (tmRNA), required for stable association of tmRNA with ribosomes. tmRNA and SmpB together mimic tRNA shape, replacing the anticodon stem-loop with SmpB. tmRNA is encoded by the ssrA gene; the 2 termini fold to resemble tRNA(Ala) and it encodes a 'tag peptide', a short internal open reading frame. During trans-translation Ala-aminoacylated tmRNA acts like a tRNA, entering the A-site of stalled ribosomes, displacing the stalled mRNA. The ribosome then switches to translate the ORF on the tmRNA; the nascent peptide is terminated with the 'tag peptide' encoded by the tmRNA and targeted for degradation. The ribosome is freed to recommence translation, which seems to be the essential function of trans-translation. The sequence is that of SsrA-binding protein from Rickettsia rickettsii.